Here is a 362-residue protein sequence, read N- to C-terminus: Forkhead box protein F (362 aa).

The interval 19–70 (LDSTAPNNSHRTIKAENYFNEDEEDYNENSHEDSEDSKEDSDGQGCRSRKRK) is disordered. A compositionally biased stretch (acidic residues) spans 37–57 (FNEDEEDYNENSHEDSEDSKE). Positions 72–169 (KPPFSYIALI…EENGFRRRPR (98 aa)) form a DNA-binding region, fork-head.

The protein resides in the nucleus. Transcription factor that is required for cell fate of coelomocytes which are non-muscle mesodermal cells. Acts in concert with, and by activating expression of, the homeodomain gene ceh-34. Binds to the sequence motif 5'-ATAAA[T/C]A-3'. This Caenorhabditis elegans protein is Forkhead box protein F.